A 494-amino-acid polypeptide reads, in one-letter code: Ketol-acid reductoisomerase (NADP(+)) (494 aa).

Residues 14–208 enclose the KARI N-terminal Rossmann domain; it reads LDQLGRCRFM…GGHRAGCLES (195 aa). Residues 45–48, Arg-68, Arg-76, Ser-78, and 108–110 each bind NADP(+); these read CGAQ and DKQ. His-132 is an active-site residue. Gly-158 is a binding site for NADP(+). KARI C-terminal knotted domains are found at residues 209 to 344 and 345 to 487; these read SFVA…NYPD and SSLE…MTDM. Asp-217, Glu-221, Glu-389, and Glu-393 together coordinate Mg(2+). A substrate-binding site is contributed by Ser-414.

It belongs to the ketol-acid reductoisomerase family. Mg(2+) is required as a cofactor.

It catalyses the reaction (2R)-2,3-dihydroxy-3-methylbutanoate + NADP(+) = (2S)-2-acetolactate + NADPH + H(+). It carries out the reaction (2R,3R)-2,3-dihydroxy-3-methylpentanoate + NADP(+) = (S)-2-ethyl-2-hydroxy-3-oxobutanoate + NADPH + H(+). Its pathway is amino-acid biosynthesis; L-isoleucine biosynthesis; L-isoleucine from 2-oxobutanoate: step 2/4. It functions in the pathway amino-acid biosynthesis; L-valine biosynthesis; L-valine from pyruvate: step 2/4. Involved in the biosynthesis of branched-chain amino acids (BCAA). Catalyzes an alkyl-migration followed by a ketol-acid reduction of (S)-2-acetolactate (S2AL) to yield (R)-2,3-dihydroxy-isovalerate. In the isomerase reaction, S2AL is rearranged via a Mg-dependent methyl migration to produce 3-hydroxy-3-methyl-2-ketobutyrate (HMKB). In the reductase reaction, this 2-ketoacid undergoes a metal-dependent reduction by NADPH to yield (R)-2,3-dihydroxy-isovalerate. This chain is Ketol-acid reductoisomerase (NADP(+)), found in Aliivibrio salmonicida (strain LFI1238) (Vibrio salmonicida (strain LFI1238)).